Reading from the N-terminus, the 296-residue chain is 4-hydroxybenzoate octaprenyltransferase (296 aa).

Helical transmembrane passes span 28–48 (IGTL…SDGI), 51–71 (LAVL…GCVI), 102–122 (LLLT…LNHL), 143–163 (FFPI…PMAF), 174–194 (AWIL…VYAM), 212–232 (FGRY…LLMA), 233–253 (VLGA…IVLL), and 274–294 (FLAN…HTFF).

Belongs to the UbiA prenyltransferase family. It depends on Mg(2+) as a cofactor.

The protein localises to the cell inner membrane. The enzyme catalyses all-trans-octaprenyl diphosphate + 4-hydroxybenzoate = 4-hydroxy-3-(all-trans-octaprenyl)benzoate + diphosphate. It participates in cofactor biosynthesis; ubiquinone biosynthesis. In terms of biological role, catalyzes the prenylation of para-hydroxybenzoate (PHB) with an all-trans polyprenyl group. Mediates the second step in the final reaction sequence of ubiquinone-8 (UQ-8) biosynthesis, which is the condensation of the polyisoprenoid side chain with PHB, generating the first membrane-bound Q intermediate 3-octaprenyl-4-hydroxybenzoate. The chain is 4-hydroxybenzoate octaprenyltransferase from Neisseria gonorrhoeae (strain NCCP11945).